The sequence spans 225 residues: ATP-dependent dethiobiotin synthetase BioD (225 aa).

Residue 12-17 (GVGKTV) participates in ATP binding. T16 contacts Mg(2+). The active site involves K37. T41 contacts substrate. ATP is bound by residues D49, 108–111 (EGAG), and 197–199 (PAG). Mg(2+)-binding residues include D49 and E108.

This sequence belongs to the dethiobiotin synthetase family. As to quaternary structure, homodimer. The cofactor is Mg(2+).

Its subcellular location is the cytoplasm. The enzyme catalyses (7R,8S)-7,8-diammoniononanoate + CO2 + ATP = (4R,5S)-dethiobiotin + ADP + phosphate + 3 H(+). It functions in the pathway cofactor biosynthesis; biotin biosynthesis; biotin from 7,8-diaminononanoate: step 1/2. Functionally, catalyzes a mechanistically unusual reaction, the ATP-dependent insertion of CO2 between the N7 and N8 nitrogen atoms of 7,8-diaminopelargonic acid (DAPA, also called 7,8-diammoniononanoate) to form a ureido ring. The polypeptide is ATP-dependent dethiobiotin synthetase BioD (Mycolicibacterium smegmatis (strain ATCC 700084 / mc(2)155) (Mycobacterium smegmatis)).